We begin with the raw amino-acid sequence, 324 residues long: Protein SRC2 homolog (324 aa).

In terms of domain architecture, C2 spans M1–K111. The Cytoplasmic segment spans residues M1–K279. The interval G141–G281 is disordered. Low complexity-rich tracts occupy residues Y166–A175 and P246–G269. The segment covering K270–K279 has biased composition (basic residues). The chain crosses the membrane as a helical; Signal-anchor span at residues A280–V300. Residues G301 to F324 lie on the Lumenal side of the membrane.

Interacts with RBOHF (via N-terminus).

It is found in the endoplasmic reticulum membrane. Its subcellular location is the protein storage vacuole membrane. The protein resides in the cell membrane. May act as an activator of the calcium-dependent activation of RBOHF that mediates reactive oxygen species (ROS) production and may play a role in cold responses. The polypeptide is Protein SRC2 homolog (Arabidopsis thaliana (Mouse-ear cress)).